The following is a 68-amino-acid chain: Large ribosomal subunit protein bL31 (68 aa).

Zn(2+) contacts are provided by C16, C18, C36, and C39.

This sequence belongs to the bacterial ribosomal protein bL31 family. Type A subfamily. In terms of assembly, part of the 50S ribosomal subunit. It depends on Zn(2+) as a cofactor.

Binds the 23S rRNA. This Dictyoglomus thermophilum (strain ATCC 35947 / DSM 3960 / H-6-12) protein is Large ribosomal subunit protein bL31.